The chain runs to 1182 residues: Tyrosine-protein kinase ABL2 (1182 aa).

The interval 1-42 (MGQQVGRVGEAPGLQQPQPRGIRGSSAARPSGRRRDPAGRTA) is disordered. The N-myristoyl glycine moiety is linked to residue G2. Residues 2–106 (GQQVGRVGEA…SKENLLGATE (105 aa)) are CAP. The segment covering 20–30 (RGIRGSSAARP) has biased composition (low complexity). S97 is subject to Phosphoserine. In terms of domain architecture, SH3 spans 107 to 167 (SDPNLFVALY…PSNYITPVNS (61 aa)). Phosphotyrosine occurs at positions 116, 161, 174, 185, 218, and 231. Positions 173–263 (WYHGPVSRSA…GLVTTLHYPA (91 aa)) constitute an SH2 domain. At Y261 the chain carries Phosphotyrosine; by ABL1 and autocatalysis. Y272 carries the phosphotyrosine; by autocatalysis modification. Residue S275 is modified to Phosphoserine. One can recognise a Protein kinase domain in the interval 288-539 (ITMKHKLGGG…PSFAETHQAF (252 aa)). 294–302 (LGGGQYGEV) contacts ATP. Y299 and Y303 each carry phosphotyrosine. ATP is bound by residues K317 and 362 to 368 (EYMPYGN). The active-site Proton acceptor is D409. A Kinase activation loop motif is present at residues 427 to 451 (DFGLSRLMTGDTYTAHAGAKFPIKW). Phosphotyrosine; by autocatalysis and SRC-type Tyr-kinases is present on Y439. Y459 carries the phosphotyrosine modification. Y568 carries the post-translational modification Phosphotyrosine; by autocatalysis. Phosphoserine occurs at positions 606, 621, 632, 634, and 656. 2 disordered regions span residues 612–642 (IRST…DAKE) and 655–674 (SSFM…SSFR). Residues 659-661 (KKR) carry the Nuclear localization signal motif. Residues S670, S671, and S672 each carry the phosphoserine modification. A Phosphotyrosine; by autocatalysis modification is found at Y684. The interval 695 to 930 (SLQNADGFSV…AVLPTTHNHK (236 aa)) is F-actin-binding. The residue at position 719 (Y719) is a Phosphotyrosine. The segment at 765–796 (LRAGKPTASDDTSKPFPRSNSTSSMSSGLPEQ) is disordered. K778 carries the N6-acetyllysine modification. Residues 782 to 793 (RSNSTSSMSSGL) are compositionally biased toward polar residues. S785 is modified (phosphoserine). Residue T802 is modified to Phosphothreonine. Over residues 809-825 (RSKLQLERTVSTSSQPE) the composition is skewed to polar residues. Positions 809 to 858 (RSKLQLERTVSTSSQPEENVDRANDMLPKKSEEGAAPARERPKAKLLPRG) are disordered. Phosphoserine occurs at positions 819 and 822. Positions 827–851 (NVDRANDMLPKKSEEGAAPARERPK) are enriched in basic and acidic residues. Phosphoserine occurs at positions 915 and 936. A disordered region spans residues 964 to 1059 (HQVTSSGDKD…TSSISPAKMA (96 aa)). Residues 1020–1182 (EGGKKAAPGP…VQEISDVVQR (163 aa)) form an F-actin-binding region.

This sequence belongs to the protein kinase superfamily. Tyr protein kinase family. ABL subfamily. In terms of assembly, interacts with PSMA7. Interacts with CTTN. Found in a complex with ABL1, ABL2, CRK and UNC119; leading to the inhibition of CRK phosphorylation by ABL kinases. The cofactor is Mg(2+). Mn(2+) is required as a cofactor. Post-translationally, phosphorylated at Tyr-261 by ABL1 in response to oxidative stress. Phosphorylated by PDGFRB. In terms of processing, polyubiquitinated. Polyubiquitination of ABL2 leads to degradation. As to expression, most abundant in adult mouse brain, especially in synapse-rich regions.

It localises to the cytoplasm. The protein resides in the cytoskeleton. The enzyme catalyses L-tyrosyl-[protein] + ATP = O-phospho-L-tyrosyl-[protein] + ADP + H(+). With respect to regulation, stabilized in the inactive form by an association between the SH3 domain and the SH2-TK linker region, interactions of the N-terminal cap, and contributions from an N-terminal myristoyl group and phospholipids. Activated by autophosphorylation as well as by SRC-family kinase-mediated phosphorylation. Activated by RIN1 binding to the SH2 and SH3 domains. Inhibited by imatinib mesylate (Gleevec). Phosphatidylinositol 4,5-bisphosphate (PIP2), a highly abundant phosphoinositide known to regulate cytoskeletal and membrane proteins, inhibits the tyrosine kinase activity. Functionally, non-receptor tyrosine-protein kinase that plays an ABL1-overlapping role in key processes linked to cell growth and survival such as cytoskeleton remodeling in response to extracellular stimuli, cell motility and adhesion, receptor endocytosis, autophagy, DNA damage response and apoptosis. Coordinates actin remodeling through tyrosine phosphorylation of proteins controlling cytoskeleton dynamics like MYH10 (involved in movement); CTTN (involved in signaling); or TUBA1 and TUBB (microtubule subunits). Binds directly F-actin and regulates actin cytoskeletal structure through its F-actin-bundling activity. Involved in the regulation of cell adhesion and motility through phosphorylation of key regulators of these processes such as CRK, CRKL or DOK1. Required for adhesion-dependent phosphorylation of ARHGAP35 which promotes its association with RASA1, resulting in recruitment of ARHGAP35 to the cell periphery where it inhibits RHO. Phosphorylates multiple receptor tyrosine kinases like PDGFRB and other substrates which are involved in endocytosis regulation such as RIN1. In brain, may regulate neurotransmission by phosphorylating proteins at the synapse. Finally, functions as its own regulator through autocatalytic activity as well as through phosphorylation of its inhibitor, ABI1. Positively regulates chemokine-mediated T-cell migration, polarization, and homing to lymph nodes and immune-challenged tissues, potentially via activation of NEDD9/HEF1 and RAP1. The sequence is that of Tyrosine-protein kinase ABL2 from Mus musculus (Mouse).